Reading from the N-terminus, the 422-residue chain is Zinc finger protein zfp-2 (422 aa).

Residues 95-119 are disordered; the sequence is AIPCTSSSMQPSTSSNPSSGEHQPV. Over residues 99 to 113 the composition is skewed to low complexity; sequence TSSSMQPSTSSNPSS. C2H2-type zinc fingers lie at residues 171–194, 200–222, 229–251, 255–278, 300–322, 328–350, and 356–379; these read YRCT…QEVH, FRCF…LKDH, FSCD…HKMH, STCQ…STAH, YSCS…ERIH, YSCG…IRTH, and YGCG…LAAH.

Expressed in vulval cells and all somatic gonad structures such as spermatheca, sheath cells, uterine cells and distal tip cells.

The protein resides in the nucleus. Probable zinc finger transcription factor that acts as a transcriptional repressor. Acts redundantly with the transcriptional repressor lin-35 to control the development of somatic gonad lineages. May, in addition, suppress sensitivity to RNAi. In Caenorhabditis elegans, this protein is Zinc finger protein zfp-2.